A 249-amino-acid chain; its full sequence is Anamorsin homolog (249 aa).

Residues 1–130 are N-terminal SAM-like domain; that stretch reads MEQFKDLQKS…ETGSAARLSF (130 aa). Positions 131–161 are linker; that stretch reads AKKAAGVNVWKISGDDEELIDEEDLLDEADK. [2Fe-2S] cluster contacts are provided by C172, C181, C184, and C186. Residues 172–186 form a fe-S binding site A region; that stretch reads CSTTGKRKACKNCSC. [4Fe-4S] cluster contacts are provided by C210, C213, C221, and C224. 2 short sequence motifs (cx2C motif) span residues 210 to 213 and 221 to 224; these read CGNC and CSTC. The segment at 210–224 is fe-S binding site B; the sequence is CGNCYLGDAFRCSTC.

It belongs to the anamorsin family. As to quaternary structure, monomer. [2Fe-2S] cluster is required as a cofactor. The cofactor is [4Fe-4S] cluster.

The protein localises to the cytoplasm. Its subcellular location is the mitochondrion intermembrane space. Its function is as follows. Component of the cytosolic iron-sulfur (Fe-S) protein assembly (CIA) machinery. Required for the maturation of extramitochondrial Fe-S proteins. Part of an electron transfer chain functioning in an early step of cytosolic Fe-S biogenesis, facilitating the de novo assembly of a [4Fe-4S] cluster on the cytosolic Fe-S scaffold complex. Electrons are transferred from NADPH via a FAD- and FMN-containing diflavin oxidoreductase. Together with the diflavin oxidoreductase, also required for the assembly of the diferric tyrosyl radical cofactor of ribonucleotide reductase (RNR), probably by providing electrons for reduction during radical cofactor maturation in the catalytic small subunit. The sequence is that of Anamorsin homolog from Drosophila grimshawi (Hawaiian fruit fly).